Reading from the N-terminus, the 318-residue chain is Cytochrome f (318 aa).

An N-terminal signal peptide occupies residues 1 to 34; it reads MKNNYLANLIKTLQAIVVSVALLAPLVLPSAVNA. Heme is bound by residues Phe35, Cys55, Cys58, and His59. A helical transmembrane segment spans residues 284 to 304; the sequence is VKGLIAFFFTVILAQILLVLK.

This sequence belongs to the cytochrome f family. In terms of assembly, the 4 large subunits of the cytochrome b6-f complex are cytochrome b6, subunit IV (17 kDa polypeptide, petD), cytochrome f and the Rieske protein, while the 4 small subunits are PetG, PetL, PetM and PetN. The complex functions as a dimer. Heme serves as cofactor.

It localises to the plastid. The protein resides in the chloroplast thylakoid membrane. In terms of biological role, component of the cytochrome b6-f complex, which mediates electron transfer between photosystem II (PSII) and photosystem I (PSI), cyclic electron flow around PSI, and state transitions. The chain is Cytochrome f from Rhodomonas salina (Cryptomonas salina).